Here is a 395-residue protein sequence, read N- to C-terminus: PCI domain-containing protein 2 homolog (395 aa).

A PCI domain is found at I208–P389.

The protein belongs to the CSN12 family. Component of the nuclear pore complex (NPC)-associated TREX-2/AMEX complex (anchoring and mRNA export complex), composed of e(y)2, xmas and PCID2. Interaction between the TREX-2/AMEX complex and the ORC complex is required for ORC localization to mRNPs, and consequently mRNA export. Within the TREX-2/AMEX-ORC complex, interacts with Orc3 and Orc4. Interacts with sbr/NXF1. Interacts with Moe. Interacts with nudC; required to maintain stability in the cytoplasm. In terms of processing, mono- and poly-ubiquitinated.

Its subcellular location is the nucleus. The protein localises to the cytoplasm. The protein resides in the nucleus membrane. It is found in the cytoskeleton. Functionally, required for the export of nuclear mRNAs and involved in mRNA trafficking in the cytoplasm. Component of the nuclear pore complex (NPC)-associated TREX-2/AMEX complex (anchoring and mRNA export complex) which functions in docking export-competent ribonucleoprotein particles (mRNPs) to the nuclear entrance of the nuclear pore complex (nuclear basket), thereby enabling the export of mRNAs to the cytoplasm through the nuclear pores. Within the complex, specifically promotes the association of factors involved in regulating nuclear mRNA export, such as Moe, sbr/NXF1 and the ORC complex, to the mRNPs particles. In the cytoplasm, functions independently of its role in the TREX-2/AMEX complex, to promote cytoplasmic mRNA trafficking together with nudC. Associates with translationally active polysomes. This chain is PCI domain-containing protein 2 homolog, found in Drosophila melanogaster (Fruit fly).